A 108-amino-acid polypeptide reads, in one-letter code: Iron-sulfur cluster assembly protein CyaY (108 aa).

It belongs to the frataxin family.

Involved in iron-sulfur (Fe-S) cluster assembly. May act as a regulator of Fe-S biogenesis. The sequence is that of Iron-sulfur cluster assembly protein CyaY from Burkholderia mallei (strain NCTC 10247).